A 231-amino-acid polypeptide reads, in one-letter code: DNA mismatch repair protein MutH (231 aa).

It belongs to the MutH family.

Its subcellular location is the cytoplasm. Functionally, sequence-specific endonuclease that cleaves unmethylated GATC sequences. It is involved in DNA mismatch repair. The polypeptide is DNA mismatch repair protein MutH (Salmonella typhi).